The primary structure comprises 328 residues: GTPase Obg (328 aa).

In terms of domain architecture, Obg spans 2-160; the sequence is YNFKDSVSIT…LNVRLELFLV (159 aa). Residues 161–326 enclose the OBG-type G domain; it reads ADIGLVGLPN…LIKEFFVLAK (166 aa). Residues 167–174, 192–196, 213–216, 280–283, and 307–309 contribute to the GTP site; these read GLPNAGKS, FTTKI, DIPG, NKLD, and SIY. 2 residues coordinate Mg(2+): Ser-174 and Thr-194.

It belongs to the TRAFAC class OBG-HflX-like GTPase superfamily. OBG GTPase family. Monomer. Mg(2+) is required as a cofactor.

It localises to the cytoplasm. Its function is as follows. An essential GTPase which binds GTP, GDP and possibly (p)ppGpp with moderate affinity, with high nucleotide exchange rates and a fairly low GTP hydrolysis rate. Plays a role in control of the cell cycle, stress response, ribosome biogenesis and in those bacteria that undergo differentiation, in morphogenesis control. This is GTPase Obg from Borreliella afzelii (strain PKo) (Borrelia afzelii).